A 357-amino-acid polypeptide reads, in one-letter code: Alanine racemase (357 aa).

Residue Lys-33 is the Proton acceptor; specific for D-alanine of the active site. Lys-33 carries the post-translational modification N6-(pyridoxal phosphate)lysine. Arg-129 is a substrate binding site. Tyr-253 acts as the Proton acceptor; specific for L-alanine in catalysis. Residue Met-301 coordinates substrate.

This sequence belongs to the alanine racemase family. The cofactor is pyridoxal 5'-phosphate.

It carries out the reaction L-alanine = D-alanine. The protein operates within amino-acid biosynthesis; D-alanine biosynthesis; D-alanine from L-alanine: step 1/1. Functionally, catalyzes the interconversion of L-alanine and D-alanine. May also act on other amino acids. The protein is Alanine racemase (alr) of Pseudomonas syringae pv. syringae (strain B728a).